A 54-amino-acid polypeptide reads, in one-letter code: Large ribosomal subunit protein eL37 (54 aa).

Zn(2+)-binding residues include Cys20, Cys23, Cys35, and Cys38. The segment at 20 to 38 (CRRCGHHTYNVRTKRCSHC) adopts a C4-type zinc-finger fold.

This sequence belongs to the eukaryotic ribosomal protein eL37 family. Zn(2+) is required as a cofactor.

Its function is as follows. Binds to the 23S rRNA. This Thermoplasma acidophilum (strain ATCC 25905 / DSM 1728 / JCM 9062 / NBRC 15155 / AMRC-C165) protein is Large ribosomal subunit protein eL37 (rpl37e).